The chain runs to 171 residues: Sigma intracellular receptor 2 (171 aa).

Topologically, residues 1-6 (MAVCAR) are cytoplasmic. Residues 7 to 27 (LLEWIFFFYFFSHIPITLLVD) form a helical membrane-spanning segment. One can recognise an EXPERA domain in the interval 8–153 (LEWIFFFYFF…PYLLVPVLLL (146 aa)). Residues 28-66 (LQAVLPPSLYPQELLDLMKWYTVAFKDHLMANPPPWFKS) lie on the Lumenal side of the membrane. A helical transmembrane segment spans residues 67–87 (FVYCEAILQLPFFPVAAYAFF). Cholesterol is bound by residues isoleucine 73 and glutamine 75. The Cytoplasmic portion of the chain corresponds to 88–97 (KGGCKWIRIP). Residues 98–118 (AIVYSAHVATTVIAIIGHILF) form a helical membrane-spanning segment. Over 119 to 137 (GEFPKSDVIAPLTQKDRLT) the chain is Lumenal. The helical transmembrane segment at 138-158 (LVSIYAPYLLVPVLLLLTMLF) threads the bilayer. The Cytoplasmic portion of the chain corresponds to 159 to 171 (SPRYRQEEKRKRK). The ER retention motif signature appears at 167–171 (KRKRK).

This sequence belongs to the TMEM97/sigma-2 receptor family. Homodimer.

It is found in the rough endoplasmic reticulum membrane. The protein resides in the nucleus membrane. In terms of biological role, sigma-2 receptor which contributes to ameliorate dysfunctional cellular processes and slow degenerative progression by regulating cell functions including cholesterol biosynthesis/trafficking, membrane trafficking, autophagy, lipid membrane-bound protein trafficking, and receptor stabilization at the cell surface. Forms a ternary complex with PGRMC1 receptor and low density lipoprotein receptor/LDLR at the plasma membrane, which increases LDLR-mediated LDL cholesterol internalization. Decreases lysosomal sterol transporter NPC1 availability to the cell, probably through NPC1-binding, hence controlling lipid transport, including cholesterol and LBPA, outside of late endosome/lysosome. Binds regio- and stereoselective ligand 20(S)-hydroxycholesterol (20(S)-OHC), thereby linking OHC binding to cholesterol homeostasis. Also able to bind cholesterol. Binds histatin 1 (Hst 1)/HN1 salivary peptide at the ER membrane, which is critical for increasing mitochondria-ER contacts and stimulating Hst1 wound healing properties. May alter the activity of some cytochrome P450 proteins. Although shows homologies with sterol isomerases (EXPERA domain), not able to catalyze sterol isomerization. However, may act as sensors of these molecules. Acts as a quality control factor in the ER, promoting the proteolytic degradation of nonproductive and extramitochondrial precursor proteins in the ER membrane thus removing them from the ER surface. The chain is Sigma intracellular receptor 2 (tmem97) from Xenopus tropicalis (Western clawed frog).